The primary structure comprises 287 residues: Protease HtpX (287 aa).

A run of 2 helical transmembrane segments spans residues 4-24 (IFLL…VMSI) and 33-53 (GGLL…SLAI). A Zn(2+)-binding site is contributed by H139. E140 is an active-site residue. H143 contributes to the Zn(2+) binding site. 2 helical membrane-spanning segments follow: residues 154–174 (LIQG…AGII) and 195–215 (AVVF…VAYF). Zn(2+) is bound at residue E220.

The protein belongs to the peptidase M48B family. It depends on Zn(2+) as a cofactor.

It localises to the cell inner membrane. In Shewanella baltica (strain OS185), this protein is Protease HtpX.